Consider the following 503-residue polypeptide: Probable cytosol aminopeptidase (503 aa).

2 residues coordinate Mn(2+): lysine 270 and aspartate 275. Lysine 282 is an active-site residue. The Mn(2+) site is built by aspartate 293, aspartate 352, and glutamate 354. Arginine 356 is a catalytic residue.

Belongs to the peptidase M17 family. Mn(2+) serves as cofactor.

The protein resides in the cytoplasm. The enzyme catalyses Release of an N-terminal amino acid, Xaa-|-Yaa-, in which Xaa is preferably Leu, but may be other amino acids including Pro although not Arg or Lys, and Yaa may be Pro. Amino acid amides and methyl esters are also readily hydrolyzed, but rates on arylamides are exceedingly low.. The catalysed reaction is Release of an N-terminal amino acid, preferentially leucine, but not glutamic or aspartic acids.. In terms of biological role, presumably involved in the processing and regular turnover of intracellular proteins. Catalyzes the removal of unsubstituted N-terminal amino acids from various peptides. This is Probable cytosol aminopeptidase from Shigella flexneri.